A 95-amino-acid chain; its full sequence is MSVDISTVKRVAHLARIAVSEDDAERMTGELNAILGFVEQLNEVDVEGIEPMTSVTPMKMRMREDKVTDGGIAAAVVANAPVTEDNFFVVPKVVE.

The protein belongs to the GatC family. As to quaternary structure, heterotrimer of A, B and C subunits.

The catalysed reaction is L-glutamyl-tRNA(Gln) + L-glutamine + ATP + H2O = L-glutaminyl-tRNA(Gln) + L-glutamate + ADP + phosphate + H(+). It carries out the reaction L-aspartyl-tRNA(Asn) + L-glutamine + ATP + H2O = L-asparaginyl-tRNA(Asn) + L-glutamate + ADP + phosphate + 2 H(+). Allows the formation of correctly charged Asn-tRNA(Asn) or Gln-tRNA(Gln) through the transamidation of misacylated Asp-tRNA(Asn) or Glu-tRNA(Gln) in organisms which lack either or both of asparaginyl-tRNA or glutaminyl-tRNA synthetases. The reaction takes place in the presence of glutamine and ATP through an activated phospho-Asp-tRNA(Asn) or phospho-Glu-tRNA(Gln). In Brucella abortus (strain S19), this protein is Aspartyl/glutamyl-tRNA(Asn/Gln) amidotransferase subunit C.